The chain runs to 335 residues: Phospholipid scramblase 1 (335 aa).

The tract at residues M1 to P101 is proline-rich domain (PRD). Positions M1–W102 are disordered. At M1 to K305 the chain is on the cytoplasmic side. 6 repeat units span residues Q23–P29, Q30–P36, Q37–P43, Q44–P50, Q51–P57, and Q58–P64. Positions Q23–P71 are 7 X 7 AA tandem repeats of Q-G-P-Y-[AP]-G-P. The span at Y26–Q37 shows a compositional bias: pro residues. Residues G59–P72 show a composition bias toward pro residues. The short motif at P64–P72 is the SH3-binding 1 element. A 7; approximate repeat occupies Q65–P71. Y91 carries the post-translational modification Phosphotyrosine; by ABL. Residues P101–P109 carry the SH3-binding 2 motif. T178 bears the Phosphothreonine; by PKC/PRKCD mark. S-palmitoyl cysteine attachment occurs at residues C201, C202, C205, and C206. The Nuclear localization signal signature appears at G274–F283. Residues M306–F322 traverse the membrane as a helical segment. The Extracellular portion of the chain corresponds to E323–W335.

Belongs to the phospholipid scramblase family. As to quaternary structure, forms homooligomers in the presence of calcium. Interacts with ABL. Interacts with RELT, RELL1 and RELL2. Interacts with OXSR1 in the presence of RELT. Interacts with OCLN, TOP2A and TOP2B. Interacts with TRPC1, TRPC4 and TRPC5. Interacts with ILDR1. The cofactor is Ca(2+). Mg(2+) is required as a cofactor. Zn(2+) serves as cofactor. In terms of processing, phosphorylated on tyrosine residues. Phosphorylated by OXSR1 in the presence of RELT. Phosphorylation at Thr-178 by PKC/PKCD increases its phospholipid scramblase activity during both cell stimulation and apoptosis. Palmitoylation is required for its phospholipid scramblase activity. Palmitoylation regulates its localization to the cell membrane or the nucleus; trafficking to the cell membrane is dependent upon palmitoylation whereas in the absence of palmitoylation, localizes to the nucleus.

The protein localises to the cell membrane. It is found in the nucleus. The protein resides in the cytoplasm. Its subcellular location is the perinuclear region. It carries out the reaction a 1,2-diacyl-sn-glycero-3-phosphocholine(in) = a 1,2-diacyl-sn-glycero-3-phosphocholine(out). The enzyme catalyses a 1,2-diacyl-sn-glycero-3-phosphoethanolamine(in) = a 1,2-diacyl-sn-glycero-3-phosphoethanolamine(out). It catalyses the reaction a 1,2-diacyl-sn-glycero-3-phospho-L-serine(in) = a 1,2-diacyl-sn-glycero-3-phospho-L-serine(out). Functionally, catalyzes calcium-induced ATP-independent rapid bidirectional and non-specific distribution of phospholipids (lipid scrambling or lipid flip-flop) between the inner and outer leaflet of the plasma membrane resulting in collapse of the phospholipid asymmetry which leads to phosphatidylserine externalization on the cell surface. Mediates calcium-dependent phosphatidylserine externalization and apoptosis in neurons via its association with TRPC5. Also exhibits magnesium-dependent nuclease activity against double-stranded DNA and RNA but not single-stranded DNA and can enhance DNA decatenation mediated by TOP2A. Negatively regulates FcR-mediated phagocytosis in differentiated macrophages. May contribute to cytokine-regulated cell proliferation and differentiation. The chain is Phospholipid scramblase 1 (Plscr1) from Rattus norvegicus (Rat).